Consider the following 338-residue polypeptide: MAVNLLKKNSLALVASLLLAGHVQATELLNSSYDVSRELFAALNPPFEQQWAKDNGGDKLTIKQSHAGSSKQALAILQGLKADVVTYNQVTDVQILHDKGKLIPADWQSRLPNNSSPFYSTMGFLVRKGNPKNIHDWNDLVRSDVKLIFPNPKTSGNARYTYLAAWGAADKADGGDKGKTEQFMTQFLKNVEVFDTGGRGATTTFAERGLGDVLISFESEVNNIRKQYEAQGFEVVIPKTNILAEFPVAWVDKNVQANGTEKAAKAYLNWLYSPQAQTIITDYYYRVNNPEVMDKLKDKFPQTELFRVEDKFGSWPEVMKTHFTSGGELDKLLAAGRN.

The signal sequence occupies residues M1–A25.

The protein belongs to the prokaryotic sulfate-binding protein family. The complex is composed of two ATP-binding proteins (CysA), two transmembrane proteins (CysT and CysW) and a solute-binding protein (CysP).

The protein localises to the periplasm. Its function is as follows. Part of the ABC transporter complex CysAWTP (TC 3.A.1.6.1) involved in sulfate/thiosulfate import. This protein specifically binds thiosulfate and is involved in its transmembrane transport. This chain is Thiosulfate-binding protein (cysP), found in Escherichia coli (strain K12).